Consider the following 195-residue polypeptide: Imidazoleglycerol-phosphate dehydratase (195 aa).

Belongs to the imidazoleglycerol-phosphate dehydratase family.

Its subcellular location is the cytoplasm. It catalyses the reaction D-erythro-1-(imidazol-4-yl)glycerol 3-phosphate = 3-(imidazol-4-yl)-2-oxopropyl phosphate + H2O. The protein operates within amino-acid biosynthesis; L-histidine biosynthesis; L-histidine from 5-phospho-alpha-D-ribose 1-diphosphate: step 6/9. The chain is Imidazoleglycerol-phosphate dehydratase from Acetivibrio thermocellus (strain ATCC 27405 / DSM 1237 / JCM 9322 / NBRC 103400 / NCIMB 10682 / NRRL B-4536 / VPI 7372) (Clostridium thermocellum).